The chain runs to 535 residues: MNWRNLDECAAYARLQAIRAPSLKTVLCGPEGIERVRRYCTDAGAGLRYHYAAKTVNEEILTALAALADEQELVAKYDALRAGAQINTGEKRKVLHHLTRLGVQGSSLASLPCEVRDMHAFYTKEYERVCAFARQVHEGGLRTSRGAPFTDVVQIGIGGSDLGPRALYLALEGWAQRHQAVKMRTHFISNVDPDDAALVLSKLPLETTLFILVSKSGTTLETLSNELFVAHVLRQAGLEPHTQFVAVTSETSPLANNPQYLASFYMDDFIGGRYSSSSVCGAVVLTLAFGPQVFGHFLSGAAEADRAAQEQDIRRNAALLDALIGVYERTILGYEHTAVLPYSQALARFPAHLQQLDMESNGKSVNRFGIPITYKTGPVIFGEPGTNGQHSFYQHLHQGTSVVPLQFIAFQHSQLGQDPIIRGSTGQQKLLANVVAQIVAFARGKEHADANKTFSGERPSSLLYAKALTPQTLGALLAHFENKIMFQGFAWNLNSFDQEGVQLGKTLAQHILAGEVEGVLRAYADLFDLAHAPTC.

Catalysis depends on Glu-359, which acts as the Proton donor. Active-site residues include His-390 and Lys-505.

Belongs to the GPI family.

It localises to the cytoplasm. The catalysed reaction is alpha-D-glucose 6-phosphate = beta-D-fructose 6-phosphate. It participates in carbohydrate biosynthesis; gluconeogenesis. Its pathway is carbohydrate degradation; glycolysis; D-glyceraldehyde 3-phosphate and glycerone phosphate from D-glucose: step 2/4. In terms of biological role, catalyzes the reversible isomerization of glucose-6-phosphate to fructose-6-phosphate. This is Glucose-6-phosphate isomerase from Treponema pallidum (strain Nichols).